Reading from the N-terminus, the 91-residue chain is MGLEDEQKMLTESGDPEEEEEEEEELVDPLTTVREQCEQLEKCVKARERLELCDERVSSRSHTEEDCTEELFDFLHARDHCVAHKLFNNLK.

Residues 1–13 (MGLEDEQKMLTES) constitute a mitochondrion transit peptide. The disordered stretch occupies residues 1-30 (MGLEDEQKMLTESGDPEEEEEEEEELVDPL). Residues 14–27 (GDPEEEEEEEEELV) show a composition bias toward acidic residues. Cystine bridges form between C37–C81 and C53–C67. K42 carries the post-translational modification N6-acetyllysine. An N6-acetyllysine modification is found at K85.

The protein belongs to the UQCRH/QCR6 family. As to quaternary structure, component of the ubiquinol-cytochrome c oxidoreductase (cytochrome b-c1 complex, complex III, CIII), a multisubunit enzyme composed of 11 subunits. The complex is composed of 3 respiratory subunits cytochrome b, cytochrome c1 and Rieske protein UQCRFS1, 2 core protein subunits UQCRC1/QCR1 and UQCRC2/QCR2, and 6 low-molecular weight protein subunits UQCRH/QCR6, UQCRB/QCR7, UQCRQ/QCR8, UQCR10/QCR9, UQCR11/QCR10 and subunit 9, the cleavage product of Rieske protein UQCRFS1. The complex exists as an obligatory dimer and forms supercomplexes (SCs) in the inner mitochondrial membrane with NADH-ubiquinone oxidoreductase (complex I, CI) and cytochrome c oxidase (complex IV, CIV), resulting in different assemblies (supercomplex SCI(1)III(2)IV(1) and megacomplex MCI(2)III(2)IV(2)).

The protein localises to the mitochondrion inner membrane. Component of the ubiquinol-cytochrome c oxidoreductase, a multisubunit transmembrane complex that is part of the mitochondrial electron transport chain which drives oxidative phosphorylation. The respiratory chain contains 3 multisubunit complexes succinate dehydrogenase (complex II, CII), ubiquinol-cytochrome c oxidoreductase (cytochrome b-c1 complex, complex III, CIII) and cytochrome c oxidase (complex IV, CIV), that cooperate to transfer electrons derived from NADH and succinate to molecular oxygen, creating an electrochemical gradient over the inner membrane that drives transmembrane transport and the ATP synthase. The cytochrome b-c1 complex catalyzes electron transfer from ubiquinol to cytochrome c, linking this redox reaction to translocation of protons across the mitochondrial inner membrane, with protons being carried across the membrane as hydrogens on the quinol. In the process called Q cycle, 2 protons are consumed from the matrix, 4 protons are released into the intermembrane space and 2 electrons are passed to cytochrome c. The sequence is that of Cytochrome b-c1 complex subunit 6, mitochondrial (UQCRH) from Homo sapiens (Human).